The primary structure comprises 416 residues: Serine hydroxymethyltransferase (416 aa).

(6S)-5,6,7,8-tetrahydrofolate-binding positions include L121 and 125–127; that span reads GHL. Residue K229 is modified to N6-(pyridoxal phosphate)lysine.

Belongs to the SHMT family. As to quaternary structure, homodimer. The cofactor is pyridoxal 5'-phosphate.

It localises to the cytoplasm. The enzyme catalyses (6R)-5,10-methylene-5,6,7,8-tetrahydrofolate + glycine + H2O = (6S)-5,6,7,8-tetrahydrofolate + L-serine. Its pathway is one-carbon metabolism; tetrahydrofolate interconversion. The protein operates within amino-acid biosynthesis; glycine biosynthesis; glycine from L-serine: step 1/1. Its function is as follows. Catalyzes the reversible interconversion of serine and glycine with tetrahydrofolate (THF) serving as the one-carbon carrier. This reaction serves as the major source of one-carbon groups required for the biosynthesis of purines, thymidylate, methionine, and other important biomolecules. Also exhibits THF-independent aldolase activity toward beta-hydroxyamino acids, producing glycine and aldehydes, via a retro-aldol mechanism. The chain is Serine hydroxymethyltransferase from Neisseria meningitidis serogroup C (strain 053442).